Reading from the N-terminus, the 337-residue chain is MEKLSINNNNNNRRYQSRRFDGITIIRIVVLVFIVTVSTYFVNSYTCNQPHHNHSTRPSHYLPINGTHGLMNNDDSLHNKGAIGHYNTTVSLERRADENNSTTNGLFPSTSSSTFIFTPSSSSSSTFQQSRSSPQTTSTSSFVATTSSFQQETSQTSIPDTTTDFSFSSFSEAPTTSTTSSTSEFSSTPQETSNTVTSTSSTSTSSSSSPTSSPATTSASQHVTTFSSVDNGKTIVVTRTSVISSSPTASNSNNNKNNDNGGGLSHTNRIVVGVVVGVGGSILIGLLAVLFYLRKRNNRDYEGGWTFWRKNEKLGSDEFFNGELGVRDRNINQGSNF.

Residues 1 to 21 lie on the Cytoplasmic side of the membrane; that stretch reads MEKLSINNNNNNRRYQSRRFD. Residues 22–42 form a helical membrane-spanning segment; it reads GITIIRIVVLVFIVTVSTYFV. Over 43–269 the chain is Extracellular; that stretch reads NSYTCNQPHH…NGGGLSHTNR (227 aa). Asn53, Asn65, Asn87, and Asn100 each carry an N-linked (GlcNAc...) asparagine glycan. Composition is skewed to low complexity over residues 124-220 and 241-259; these read SSTF…TSAS and SVIS…KNND. Disordered stretches follow at residues 124–224 and 241–265; these read SSTF…QHVT and SVIS…GGLS. A helical transmembrane segment spans residues 270–290; that stretch reads IVVGVVVGVGGSILIGLLAVL. The Glycophorin A motif lies at 273 to 277; it reads GVVVG. Topologically, residues 291–337 are cytoplasmic; the sequence is FYLRKRNNRDYEGGWTFWRKNEKLGSDEFFNGELGVRDRNINQGSNF. The Calmodulin-binding motif lies at 301–314; that stretch reads YEGGWTFWRKNEKL.

This sequence belongs to the MID2 like cell wall stress sensor family. Post-translationally, cross-linked to the carbohydrate polymers of the cell wall. In terms of processing, O-glycosylated by MNT1 and MNT2. Also N-glycosylated.

The protein resides in the cell membrane. The protein localises to the cell septum. It localises to the secreted. It is found in the cell wall. Its function is as follows. Cell-surface associated glycoprotein that acts as a plasma membrane receptor-type protein which senses the presence of matrix. Binds to calmodulin in response to environmental conditions and initiates a signaling cascade that activates CEK1, thus promoting invasive filamentation. Involved in the maintenance of the cell wall. The polypeptide is Cell-surface associated glycoprotein DFI1 (Candida albicans (strain SC5314 / ATCC MYA-2876) (Yeast)).